Reading from the N-terminus, the 320-residue chain is MIKKIGVLTSGGDAPGMNAAIRGVVRTALSEKLEVFGIYDGYLGLYENRMTLLDRYSVSDMINRGGTFLGSARFPGFYKNEIRTIAVNNLNKRNIDALVVIGGDGSYIGAQKLTKMGIPCISIPGTIDNDVAGTDYTIGYFTALETVVEAIDRLRDTSSSHQRISIVEVMGRYCGDLTLAAAIAGGCEFIVLPEIHYKKEELVSEIQAGIEKGKKHAIVAITEYICDVEKLAKYIEKKTNRETRATILGHIQRGGAPVVYDRILASRMGAYAVELLIEGYKGKCVGIQNEKMVFNDITDALKNMKRVFKKDWLITAKKLY.

Gly12 contributes to the ATP binding site. ADP contacts are provided by residues 22–26 (RGVVR) and 55–60 (RYSVSD). Residues 73–74 (RF) and 103–106 (GDGS) each bind ATP. Residue Asp104 participates in Mg(2+) binding. Substrate is bound at residue 126-128 (TID). The active-site Proton acceptor is Asp128. ADP is bound at residue Arg155. Residues Arg163 and 170 to 172 (MGR) contribute to the substrate site. ADP contacts are provided by residues 186-188 (GCE), Lys212, and 214-216 (KKH). Substrate is bound by residues Glu223, Arg244, and 250 to 253 (HIQR).

Belongs to the phosphofructokinase type A (PFKA) family. ATP-dependent PFK group I subfamily. Prokaryotic clade 'B1' sub-subfamily. As to quaternary structure, homotetramer. It depends on Mg(2+) as a cofactor.

It is found in the cytoplasm. It catalyses the reaction beta-D-fructose 6-phosphate + ATP = beta-D-fructose 1,6-bisphosphate + ADP + H(+). It participates in carbohydrate degradation; glycolysis; D-glyceraldehyde 3-phosphate and glycerone phosphate from D-glucose: step 3/4. Allosterically activated by ADP and other diphosphonucleosides, and allosterically inhibited by phosphoenolpyruvate. Catalyzes the phosphorylation of D-fructose 6-phosphate to fructose 1,6-bisphosphate by ATP, the first committing step of glycolysis. This chain is ATP-dependent 6-phosphofructokinase, found in Buchnera aphidicola subsp. Schizaphis graminum (strain Sg).